A 240-amino-acid polypeptide reads, in one-letter code: Ribose-5-phosphate isomerase A (240 aa).

The tract at residues 1 to 23 (MKTSGGSDAAKRRAGESAAETVT) is disordered. Residues 32 to 35 (TGST), 92 to 95 (DGAD), and 111 to 114 (KGGG) contribute to the substrate site. The Proton acceptor role is filled by E120. K138 contributes to the substrate binding site.

Belongs to the ribose 5-phosphate isomerase family. Homodimer.

It catalyses the reaction aldehydo-D-ribose 5-phosphate = D-ribulose 5-phosphate. Its pathway is carbohydrate degradation; pentose phosphate pathway; D-ribose 5-phosphate from D-ribulose 5-phosphate (non-oxidative stage): step 1/1. Catalyzes the reversible conversion of ribose-5-phosphate to ribulose 5-phosphate. The protein is Ribose-5-phosphate isomerase A of Halorubrum lacusprofundi (strain ATCC 49239 / DSM 5036 / JCM 8891 / ACAM 34).